A 329-amino-acid polypeptide reads, in one-letter code: Fructose-1,6-bisphosphatase class 1 (329 aa).

Glu-84, Asp-103, Leu-105, and Asp-106 together coordinate Mg(2+). Substrate-binding positions include 106 to 109 (DGSS), Asn-196, and Lys-262. Glu-268 serves as a coordination point for Mg(2+).

It belongs to the FBPase class 1 family. Homotetramer. Mg(2+) serves as cofactor.

The protein resides in the cytoplasm. The enzyme catalyses beta-D-fructose 1,6-bisphosphate + H2O = beta-D-fructose 6-phosphate + phosphate. The protein operates within carbohydrate biosynthesis; gluconeogenesis. This Shewanella halifaxensis (strain HAW-EB4) protein is Fructose-1,6-bisphosphatase class 1.